We begin with the raw amino-acid sequence, 288 residues long: 4-hydroxybenzoate octaprenyltransferase (288 aa).

8 helical membrane passes run 23–43 (IGSLLLLWPTLWALWLAGKGI), 46–66 (TKILIVFVLGVFFMRAAGCVV), 98–118 (ILFVVLVLLSFGLVLTLNSMT), 141–161 (LPQVVLGAAFGWSIPMGFAAV), 165–185 (LPLVCWLLLLANICWTVAYDT), 213–233 (LIIGLLQLATLVLMVTIGWLM), 234–254 (NLGGAFYWSILLAGALFVHQQ), and 268–288 (AFLNNNYVGLVLFLGIFISYL).

Belongs to the UbiA prenyltransferase family. It depends on Mg(2+) as a cofactor.

Its subcellular location is the cell inner membrane. It catalyses the reaction all-trans-octaprenyl diphosphate + 4-hydroxybenzoate = 4-hydroxy-3-(all-trans-octaprenyl)benzoate + diphosphate. Its pathway is cofactor biosynthesis; ubiquinone biosynthesis. Functionally, catalyzes the prenylation of para-hydroxybenzoate (PHB) with an all-trans polyprenyl group. Mediates the second step in the final reaction sequence of ubiquinone-8 (UQ-8) biosynthesis, which is the condensation of the polyisoprenoid side chain with PHB, generating the first membrane-bound Q intermediate 3-octaprenyl-4-hydroxybenzoate. The protein is 4-hydroxybenzoate octaprenyltransferase of Yersinia enterocolitica serotype O:8 / biotype 1B (strain NCTC 13174 / 8081).